The chain runs to 423 residues: MFAGSVIRKLSHSEEVFARYEVFTSMTIQLRGVLDIDALSEAFDALVQAHPVLASHLETSSDGGWNLVADDLLHPGICVVDANNGAQSGCGGIQSETRLDQSVSLLNLRLTPREGGGELVLYIHHSMADGHHGAVLVDELFSRYTDVVTTGDPGPIIPQATPLSMEAVLQQRGVKKHALSGAERFMSVMYAYDLPATGTPAVLAEPGLPQAVPVTRLWLTKQETSDLAAFGREHRLSINAVVAAAILMTEWRLRETPHVPIPYVYPVDLRYVLAPPVAPTESTNLLGAAGYLAEIGQDTDIVDLATDIVATLRADLANGVVQQSGLHFGTAFEGTPPGLPPLVFCTDATAFPTMRTPPDLAIEDIQGRFYCSISVPLDLYSCGVYEGQLIIEHHGHIEEPAKALEAIRSLLCTVPSEYGWIME.

The Proton acceptor role is filled by histidine 125.

This sequence belongs to the acyltransferase PapA5 family. Monomer. Interacts directly with the acyl carrier protein (ACP) domain of the mycocerosic acid synthase (mas) protein.

It carries out the reaction 2 a mycocerosyl-[mycocerosic acid synthase] + a phthiocerol = a dimycocerosyl phthiocerol + 2 holo-[mycocerosic acid synthase].. The enzyme catalyses 2 a mycocerosyl-[mycocerosic acid synthase] + a phthiodiolone = a dimycocerosyl phthiodiolone + 2 holo-[mycocerosic acid synthase].. It catalyses the reaction 2 a mycocerosyl-[mycocerosic acid synthase] + a phenolphthiocerol = a dimycocerosyl phenolphthiocerol + 2 holo-[mycocerosic acid synthase].. Catalyzes diesterification of phthiocerol, phthiodiolone, and phenolphthiocerol with mycocerosic acids, the final step in the phthiocerol, phthiodiolone and phenolphthiocerol dimycocerosate esters (PDIM) synthesis. Can directly transfer the mycocerosate bound to the mycocerosic acid synthase (mas) onto the substrate alcohols. This is Phthiocerol/phthiodiolone dimycocerosyl transferase (papA5) from Mycobacterium leprae (strain TN).